Consider the following 305-residue polypeptide: Carbonic anhydrase 4 (305 aa).

An N-terminal signal peptide occupies residues 1-17 (MQLLLALLALAYVAPST). The Alpha-carbonic anhydrase domain maps to 20-278 (SGWCYEIQTK…LGKRQVFKSH (259 aa)). Cystine bridges form between Cys-23–Cys-35 and Cys-45–Cys-222. His-87 acts as the Proton donor/acceptor in catalysis. Residues His-114 and His-116 each contribute to the Zn(2+) site. Asn-123 carries N-linked (GlcNAc...) asparagine glycosylation. Residue His-139 participates in Zn(2+) binding. The N-linked (GlcNAc...) asparagine glycan is linked to Asn-214. 218–219 (TT) contributes to the substrate binding site. Ser-277 carries GPI-anchor amidated serine lipidation. A propeptide spans 278–305 (HAPGQLLSLPLPTLLVPTLTCLVANFLQ) (removed in mature form).

This sequence belongs to the alpha-carbonic anhydrase family. In terms of assembly, interacts with SLC4A4. Zn(2+) is required as a cofactor.

The protein localises to the cell membrane. It catalyses the reaction hydrogencarbonate + H(+) = CO2 + H2O. Inhibited by acetazolamide. In terms of biological role, catalyzes the reversible hydration of carbon dioxide into bicarbonate and protons and thus is essential to maintaining intracellular and extracellular pH. May stimulate the sodium/bicarbonate transporter activity of SLC4A4 that acts in pH homeostasis. It is essential for acid overload removal from the retina and retina epithelium, and acid release in the choriocapillaris in the choroid. In Mus musculus (Mouse), this protein is Carbonic anhydrase 4 (Ca4).